A 515-amino-acid polypeptide reads, in one-letter code: Maturase K (515 aa).

This sequence belongs to the intron maturase 2 family. MatK subfamily.

The protein localises to the plastid. The protein resides in the chloroplast. Functionally, usually encoded in the trnK tRNA gene intron. Probably assists in splicing its own and other chloroplast group II introns. In Zingiber mioga (Myoga ginger), this protein is Maturase K.